The following is a 142-amino-acid chain: Large-conductance mechanosensitive channel (142 aa).

2 helical membrane-spanning segments follow: residues 14-34 and 86-106; these read VVDL…VSSL and FGQF…VFLV.

This sequence belongs to the MscL family. Homopentamer.

It is found in the cell inner membrane. In terms of biological role, channel that opens in response to stretch forces in the membrane lipid bilayer. May participate in the regulation of osmotic pressure changes within the cell. The polypeptide is Large-conductance mechanosensitive channel (Rhizorhabdus wittichii (strain DSM 6014 / CCUG 31198 / JCM 15750 / NBRC 105917 / EY 4224 / RW1) (Sphingomonas wittichii)).